A 110-amino-acid chain; its full sequence is MVELKTIGLFLITAVAEIVGCYLPYLWLTQGRSVWLLLPAGLSLVLFAWLLSLHPTAAGRVYAAYGGVYIFVAILWLWLVDGIRPTLWDLVGSLVALFGMAIIMFAPRPA.

The next 4 membrane-spanning stretches (helical) occupy residues 7–27 (IGLFLITAVAEIVGCYLPYLW), 33–53 (SVWLLLPAGLSLVLFAWLLSL), 63–83 (AAYGGVYIFVAILWLWLVDGI), and 87–107 (LWDLVGSLVALFGMAIIMFAP).

It belongs to the UPF0060 family.

It localises to the cell inner membrane. This is UPF0060 membrane protein ASA_2267 from Aeromonas salmonicida (strain A449).